Here is a 121-residue protein sequence, read N- to C-terminus: Ribonuclease P protein component (121 aa).

The protein belongs to the RnpA family. In terms of assembly, consists of a catalytic RNA component (M1 or rnpB) and a protein subunit.

It catalyses the reaction Endonucleolytic cleavage of RNA, removing 5'-extranucleotides from tRNA precursor.. Its function is as follows. RNaseP catalyzes the removal of the 5'-leader sequence from pre-tRNA to produce the mature 5'-terminus. It can also cleave other RNA substrates such as 4.5S RNA. The protein component plays an auxiliary but essential role in vivo by binding to the 5'-leader sequence and broadening the substrate specificity of the ribozyme. The protein is Ribonuclease P protein component of Bifidobacterium adolescentis (strain ATCC 15703 / DSM 20083 / NCTC 11814 / E194a).